Consider the following 340-residue polypeptide: Phenylalanine--tRNA ligase alpha subunit (340 aa).

Glu-255 is a Mg(2+) binding site.

The protein belongs to the class-II aminoacyl-tRNA synthetase family. Phe-tRNA synthetase alpha subunit type 1 subfamily. As to quaternary structure, tetramer of two alpha and two beta subunits. It depends on Mg(2+) as a cofactor.

It localises to the cytoplasm. It carries out the reaction tRNA(Phe) + L-phenylalanine + ATP = L-phenylalanyl-tRNA(Phe) + AMP + diphosphate + H(+). This is Phenylalanine--tRNA ligase alpha subunit from Desulforamulus reducens (strain ATCC BAA-1160 / DSM 100696 / MI-1) (Desulfotomaculum reducens).